The chain runs to 416 residues: 3-hydroxy-3-methylglutaryl coenzyme A reductase AN1593 (416 aa).

The Charge relay system role is filled by glutamate 103. Residue asparagine 167 is glycosylated (N-linked (GlcNAc...) asparagine). Lysine 236 serves as the catalytic Charge relay system. The N-linked (GlcNAc...) asparagine glycan is linked to asparagine 277. Aspartate 312 (charge relay system) is an active-site residue. The helical transmembrane segment at leucine 380–serine 400 threads the bilayer. The active-site Proton donor is the histidine 408.

Belongs to the HMG-CoA reductase family.

It localises to the membrane. The catalysed reaction is (R)-mevalonate + 2 NADP(+) + CoA = (3S)-3-hydroxy-3-methylglutaryl-CoA + 2 NADPH + 2 H(+). It participates in metabolic intermediate biosynthesis; (R)-mevalonate biosynthesis; (R)-mevalonate from acetyl-CoA: step 3/3. 3-hydroxy-3-methylglutaryl coenzyme A reductase; part of the gene cluster that mediates the biosynthesis of the diterpene ent-pimara-8(14),15-diene (PD). Within the cluster, the HMG-CoA reductase AN1593 functions in the mevalonate pathway, which produces isoprenoid precursors. The geranylgeranyl pyrophosphate (GGPP) synthase AN1592 is needed in the formation of GGPP, the precursor for diterpenes. Lastly, the pimaradiene synthase pbcA performs the 2 cyclization steps that convert GGPP to ent-pimara-8(14),15-diene. The putative roles of the remaining cluster enzymes in ent-pimara-8(14),15-diene biosynthesis is unclear. The cytochrome P450 monooxygenase AN1598, the glutathione S-transferase AN1595, the oxidoreductases AN1596 and AN1597 probably function as decorative enzymes. It is possible that in biological conditions the compound is oxidized to ent-pimara-8(14),15-dien-19-oic acid, which is a bioactive diterpene compound predominant in many plant extracts. In Emericella nidulans (strain FGSC A4 / ATCC 38163 / CBS 112.46 / NRRL 194 / M139) (Aspergillus nidulans), this protein is 3-hydroxy-3-methylglutaryl coenzyme A reductase AN1593.